Here is a 131-residue protein sequence, read N- to C-terminus: Histone H3-like 4 (131 aa).

The residue at position 10 (Lys-10) is an N6,N6,N6-trimethyllysine; alternate. At Lys-10 the chain carries N6,N6-dimethyllysine; alternate. Lys-10 bears the N6-acetyllysine; alternate mark. Lys-10 carries the N6-methyllysine; alternate modification. Thr-12 is subject to Phosphothreonine. Lys-15 bears the N6-acetyllysine mark. Ser-27 bears the Phosphoserine mark. An N6,N6,N6-trimethyllysine; alternate modification is found at Lys-32. Lys-32 carries the post-translational modification N6,N6-dimethyllysine; alternate. Residue Lys-32 is modified to N6-methyllysine; alternate.

This sequence belongs to the histone H3 family. As to quaternary structure, the nucleosome is a histone octamer containing two molecules each of H2A, H2B, H3 and H4 assembled in one H3-H4 heterotetramer and two H2A-H2B heterodimers. The octamer wraps approximately 147 bp of DNA. Expressed in roots, seedlings, leaves buds and open flowers.

It is found in the nucleus. The protein resides in the chromosome. In terms of biological role, core component of nucleosome. Nucleosomes wrap and compact DNA into chromatin, limiting DNA accessibility to the cellular machineries which require DNA as a template. Histones thereby play a central role in transcription regulation, DNA repair, DNA replication and chromosomal stability. DNA accessibility is regulated via a complex set of post-translational modifications of histones, also called histone code, and nucleosome remodeling. The protein is Histone H3-like 4 of Arabidopsis thaliana (Mouse-ear cress).